Here is a 151-residue protein sequence, read N- to C-terminus: Putative pre-16S rRNA nuclease (151 aa).

The protein belongs to the YqgF nuclease family.

It localises to the cytoplasm. In terms of biological role, could be a nuclease involved in processing of the 5'-end of pre-16S rRNA. The chain is Putative pre-16S rRNA nuclease from Neisseria meningitidis serogroup C (strain 053442).